The chain runs to 665 residues: RNA-directed RNA polymerase (665 aa).

The enzyme catalyses RNA(n) + a ribonucleoside 5'-triphosphate = RNA(n+1) + diphosphate. RNA-dependent RNA polymerase which replicates the viral genome. The polypeptide is RNA-directed RNA polymerase (Atkinsonella hypoxylon (AhV)).